Here is a 376-residue protein sequence, read N- to C-terminus: N-acetyldiaminopimelate deacetylase (376 aa).

Aspartate 69 is an active-site residue. Residue glutamate 128 is the Proton acceptor of the active site.

Belongs to the peptidase M20A family. N-acetyldiaminopimelate deacetylase subfamily.

The enzyme catalyses N-acetyl-(2S,6S)-2,6-diaminopimelate + H2O = (2S,6S)-2,6-diaminopimelate + acetate. Its pathway is amino-acid biosynthesis; L-lysine biosynthesis via DAP pathway; LL-2,6-diaminopimelate from (S)-tetrahydrodipicolinate (acetylase route): step 3/3. Its function is as follows. Catalyzes the conversion of N-acetyl-diaminopimelate to diaminopimelate and acetate. The chain is N-acetyldiaminopimelate deacetylase from Streptococcus pneumoniae serotype 19F (strain G54).